We begin with the raw amino-acid sequence, 150 residues long: Detocs response regulatory protein DtcB (150 aa).

A Response regulatory domain is found at lysine 2 to leucine 150. 4-aspartylphosphate is present on aspartate 54.

In terms of processing, probably phosphorylated by DtcA.

In terms of biological role, possible phosphate scavenger member of the two-component regulatory system Detocs that confers resistance to bacteriophage. When the system (DtcA-DtcB-DtcC) is expressed in a susceptible E.coli (strain MG1655) it confers resistance to bacteriophages T2, T4, T5, T7, SECphi4, SECphi6 and SECphi27; the level of resistance varies, resistance to T2, T7 and SECphi4 is not very high. DtcA probably autophosphorylates upon sensing viral infection, and subsequently transfers the phosphate signal to DtcC which activates it, leading to an antiviral defense; DtcB (this subunit) may scavenge phosphorylation signals from accidental activation of DtcA. This is Detocs response regulatory protein DtcB from Enterobacter cloacae (strain JD6301).